A 431-amino-acid polypeptide reads, in one-letter code: Levansucrase LscC (431 aa).

Trp61, Asp62, Ala148, Arg218, and Asp219 together coordinate sucrose. Asp62 acts as the Nucleophile in catalysis. The Proton donor/acceptor role is filled by Glu303.

Belongs to the glycosyl hydrolase 68 family.

It localises to the periplasm. It carries out the reaction [6)-beta-D-fructofuranosyl-(2-&gt;](n) alpha-D-glucopyranoside + sucrose = [6)-beta-D-fructofuranosyl-(2-&gt;](n+1) alpha-D-glucopyranoside + D-glucose. Its function is as follows. Catalyzes the synthesis of levan, a fructose polymer, by transferring the fructosyl moiety from sucrose to a growing acceptor molecule. The chain is Levansucrase LscC from Pseudomonas savastanoi pv. glycinea (Pseudomonas syringae pv. glycinea).